The primary structure comprises 178 residues: Small ribosomal subunit protein bS16 (178 aa).

The interval 78–178 (KLGITQWTAG…AAPAEGEEQA (101 aa)) is disordered. Basic and acidic residues predominate over residues 91-113 (KKGEPGQKAKERAEERAQREADR). Positions 114–127 (AAAAAEAAAAPAEE) are enriched in low complexity. Acidic residues predominate over residues 128 to 139 (APAEEAPAEEAA). Over residues 140–172 (AEAAPEAAAAEEAPAAEAAAEEAAPAAEEAAPA) the composition is skewed to low complexity.

Belongs to the bacterial ribosomal protein bS16 family.

The protein is Small ribosomal subunit protein bS16 of Phenylobacterium zucineum (strain HLK1).